The following is a 260-amino-acid chain: Ribonuclease 3 (260 aa).

Residues 1 to 24 (MAQSSKYQRKPRSGERKRSQRRLE) form a disordered region. A compositionally biased stretch (basic and acidic residues) spans 12–24 (RSGERKRSQRRLE). The region spanning 33-162 (FDDLLVRTGL…FIGALYMDQG (130 aa)) is the RNase III domain. Glutamate 75 contacts Mg(2+). Aspartate 79 is an active-site residue. 2 residues coordinate Mg(2+): aspartate 148 and glutamate 151. The active site involves glutamate 151. One can recognise a DRBM domain in the interval 188 to 257 (DFKSQLQEFV…AKQALLALNQ (70 aa)).

The protein belongs to the ribonuclease III family. Homodimer. Mg(2+) is required as a cofactor.

It is found in the cytoplasm. The enzyme catalyses Endonucleolytic cleavage to 5'-phosphomonoester.. Digests double-stranded RNA. Involved in the processing of primary rRNA transcript to yield the immediate precursors to the large and small rRNAs (23S and 16S). Processes some mRNAs, and tRNAs when they are encoded in the rRNA operon. Processes pre-crRNA and tracrRNA of type II CRISPR loci if present in the organism. This chain is Ribonuclease 3, found in Shouchella clausii (strain KSM-K16) (Alkalihalobacillus clausii).